A 131-amino-acid polypeptide reads, in one-letter code: Cuticle protein 79, isoform A (131 aa).

A run of 3 repeats spans residues 37-40 (AAPA), 45-48 (AAPA), and 53-56 (AAPA).

Functionally, component of the cuticle of migratory locust which contains more than 100 different structural proteins. The protein is Cuticle protein 79, isoform A of Locusta migratoria (Migratory locust).